We begin with the raw amino-acid sequence, 280 residues long: Putative high affinity immunoglobulin gamma Fc receptor IB (280 aa).

A signal peptide spans 1–15 (MWFLTTLLLWVPVDG). Topologically, residues 16-198 (QVDTTKAVIT…LQLPTPVWFH (183 aa)) are extracellular. Ig-like C2-type domains are found at residues 22-101 (AVIT…LEIH) and 95-184 (PIQL…ISQY). 2 cysteine pairs are disulfide-bonded: Cys43–Cys85 and Cys124–Cys168. N-linked (GlcNAc...) asparagine glycans are attached at residues Asn59, Asn152, and Asn163. The helical transmembrane segment at 199 to 219 (VLFYLAVGIMFLVNTVLWVTI) threads the bilayer. The Cytoplasmic portion of the chain corresponds to 220–280 (RKELKRKKKW…VHRKEPQGAT (61 aa)). Positions 258 to 280 (KCQEQKEEQLQEGVHRKEPQGAT) are disordered.

Belongs to the immunoglobulin superfamily. FCGR1 family.

The protein resides in the cell membrane. Its function is as follows. May bind to the Fc region of immunoglobulins gamma with a low affinity compared to FCGR1A. May function in the humoral immune response. The chain is Putative high affinity immunoglobulin gamma Fc receptor IB from Homo sapiens (Human).